Here is a 1076-residue protein sequence, read N- to C-terminus: Nickel and cobalt resistance protein CnrA (1076 aa).

12 helical membrane passes run 14–34 (WLVL…LNLL), 366–386 (TVAK…FALL), 390–410 (RAAT…AIGM), 418–438 (NLMS…VIIV), 475–495 (PTVY…TFQG), 502–522 (SPMV…SLTF), 561–581 (PMPF…AFTF), 903–923 (RLAI…YMAI), 928–948 (LTAT…FALL), 959–979 (AVGF…LISA), 1003–1023 (RPVL…AIAT), and 1035–1055 (TVVI…LPAL).

It belongs to the resistance-nodulation-cell division (RND) (TC 2.A.6) family.

It is found in the cell inner membrane. Functionally, the products of the genes cnrA, cnrB, and cnrC are likely to form a membrane-bound protein complex catalyzing an energy-dependent efflux of Ni(2+) and Co(2+). The mechanism of action of the CnrCBA complex may be that of a proton/cation antiporter. The polypeptide is Nickel and cobalt resistance protein CnrA (cnrA) (Cupriavidus metallidurans (strain ATCC 43123 / DSM 2839 / NBRC 102507 / CH34) (Ralstonia metallidurans)).